A 286-amino-acid chain; its full sequence is Bifunctional protein FolD (286 aa).

NADP(+) contacts are provided by residues 166–168 and Ile232; that span reads GAS.

Belongs to the tetrahydrofolate dehydrogenase/cyclohydrolase family. As to quaternary structure, homodimer.

It carries out the reaction (6R)-5,10-methylene-5,6,7,8-tetrahydrofolate + NADP(+) = (6R)-5,10-methenyltetrahydrofolate + NADPH. It catalyses the reaction (6R)-5,10-methenyltetrahydrofolate + H2O = (6R)-10-formyltetrahydrofolate + H(+). Its pathway is one-carbon metabolism; tetrahydrofolate interconversion. Its function is as follows. Catalyzes the oxidation of 5,10-methylenetetrahydrofolate to 5,10-methenyltetrahydrofolate and then the hydrolysis of 5,10-methenyltetrahydrofolate to 10-formyltetrahydrofolate. The chain is Bifunctional protein FolD from Vibrio cholerae serotype O1 (strain ATCC 39541 / Classical Ogawa 395 / O395).